Reading from the N-terminus, the 567-residue chain is Multidrug and toxin extrusion protein 1 (567 aa).

An N-acetylmethionine modification is found at Met1. The Cytoplasmic segment spans residues Met1 to Ala37. Residue Ser18 is modified to Phosphoserine. A helical transmembrane segment spans residues Leu38 to Ile58. Over Ser59–Asp72 the chain is Extracellular. A helical transmembrane segment spans residues Ala73–Ser93. The Cytoplasmic segment spans residues Ser94 to Thr120. The chain crosses the membrane as a helical span at residues Leu121–Leu141. The Extracellular portion of the chain corresponds to Leu142–Arg152. The helical transmembrane segment at Leu153–Leu173 threads the bilayer. Over Gln174–Gln187 the chain is Cytoplasmic. The chain crosses the membrane as a helical span at residues Ile188–His208. Residues Leu209 to Ser216 lie on the Extracellular side of the membrane. Residues Ala217–Trp237 traverse the membrane as a helical segment. The Cytoplasmic portion of the chain corresponds to Arg238 to Ala257. Residues Ser258–Tyr277 form a helical membrane-spanning segment. The Extracellular portion of the chain corresponds to Glu278–Gln295. Residues Ser296–Ala316 form a helical membrane-spanning segment. The Cytoplasmic portion of the chain corresponds to Asn317–Ser336. The chain crosses the membrane as a helical span at residues Ala337–Cys357. At Lys358–Asp370 the chain is on the extracellular side. The helical transmembrane segment at Ile371 to Leu391 threads the bilayer. The Cytoplasmic segment spans residues Ala392–Gly408. The helical transmembrane segment at Ala409–Phe429 threads the bilayer. Residues Ala430 to Gly437 lie on the Extracellular side of the membrane. A helical membrane pass occupies residues Leu438–Ala458. Topologically, residues Arg459 to Arg543 are cytoplasmic. Residues Gly544–Ile564 traverse the membrane as a helical segment. At Arg565–Glu567 the chain is on the extracellular side.

This sequence belongs to the multi antimicrobial extrusion (MATE) (TC 2.A.66.1) family. As to expression, predominantly expressed in kidney and liver. Also expressed in various cells, including brain glia-like cells and capillaries, pancreatic duct cells, urinary bladder epithelium, adrenal gland cortex, heart, stomach, small intestine, thyroid gland, testes, alpha cells of the islets of Langerhans, Leydig cells, and vitamin A-storing Ito cells. Expressed in heart, stomach, small intestine, bladder, thyroid gland, adrenal gland and testes (at protein level).

It is found in the cell membrane. The protein resides in the apical cell membrane. It catalyses the reaction thiamine(out) + H(+)(in) = thiamine(in) + H(+)(out). It carries out the reaction estrone 3-sulfate(in) + H(+)(out) = estrone 3-sulfate(out) + H(+)(in). The catalysed reaction is creatinine(in) + H(+)(out) = creatinine(out) + H(+)(in). The enzyme catalyses agmatine(in) + H(+)(out) = agmatine(out) + H(+)(in). Multidrug efflux pump that functions as a H(+)/organic cation antiporter. Plays a physiological role in the excretion of cationic compounds including endogenous metabolites, drugs, toxins through the kidney and liver, into urine and bile respectively. Mediates the efflux of endogenous compounds such as creatinine, vitamin B1/thiamine, agmatine and estrone-3-sulfate. May also contribute to regulate the transport of cationic compounds in testis across the blood-testis-barrier. The protein is Multidrug and toxin extrusion protein 1 (Slc47a1) of Mus musculus (Mouse).